We begin with the raw amino-acid sequence, 165 residues long: E3 ubiquitin-protein ligase RNF181 (165 aa).

An RING-type; atypical zinc finger spans residues 88–129 (CPVCLLEFEEEETVIEMPCHHLFHSNCILPWLSKTNSCPLCR). A disordered region spans residues 136–165 (DDSYEEHKKDKARRQQQQHRLENLHGAMYT). At threonine 165 the chain carries Phosphothreonine.

This sequence belongs to the RNF181 family. As to quaternary structure, directly interacts with ITGA2B and, as a result, with integrin ITGA2B/ITGB3. There is no evidence that integrin ITGA2B/ITGB3 is an endogenous substrate for RNF181-directed ubiquitination. Post-translationally, auto-ubiquitinated as part of the enzymatic reaction.

The enzyme catalyses S-ubiquitinyl-[E2 ubiquitin-conjugating enzyme]-L-cysteine + [acceptor protein]-L-lysine = [E2 ubiquitin-conjugating enzyme]-L-cysteine + N(6)-ubiquitinyl-[acceptor protein]-L-lysine.. The protein operates within protein modification; protein ubiquitination. In terms of biological role, E3 ubiquitin-protein ligase which accepts ubiquitin from an E2 ubiquitin-conjugating enzyme in the form of a thioester and then directly transfers the ubiquitin to targeted substrates. Catalyzes monoubiquitination of 26S proteasome subunit PSMC2/RPT1. In Rattus norvegicus (Rat), this protein is E3 ubiquitin-protein ligase RNF181 (Rnf181).